A 99-amino-acid chain; its full sequence is Protein Frey (99 aa).

The chain crosses the membrane as a helical span at residues 10 to 29; that stretch reads YPRAGLSLFLFYLILAGALL. Residues 60–90 are disordered; sequence DYGLRPKHPRPGGPRPLLSQAQQRKRDGPNM.

In terms of assembly, interacts with SPPL2C (via active sites); the interaction stabilizes FREY1 protein and inhibits SPPL2C proteolytic activity. Interacts with IZUMO1; the interaction retains IZUMO1 at the endoplasmic reticulum membrane and coordinates IZUMO1 complex assembly. Expressed in round spermatids (at protein level).

Its subcellular location is the endoplasmic reticulum membrane. Key regulator for male fertility expressed transiently in round spermatids where it recruits IZUMO1 at the endoplasmic reticulum (ER) membrane and coordinates the oolemmal binding multimeric complex (IZUMO1 complex) assembly. Upon complete assembly of the IZUMO1 complex, its ER retention is released, facilitating IZUMO1 complex export to the acrosome. Through the interaction with SPPL2C, inhibits its intramembrane protease activity directly accessing the catalytic center of an I-CLiP. This chain is Protein Frey, found in Mus musculus (Mouse).